Here is a 200-residue protein sequence, read N- to C-terminus: Large ribosomal subunit protein bL25 (200 aa).

The protein belongs to the bacterial ribosomal protein bL25 family. CTC subfamily. Part of the 50S ribosomal subunit; part of the 5S rRNA/L5/L18/L25 subcomplex. Contacts the 5S rRNA. Binds to the 5S rRNA independently of L5 and L18.

In terms of biological role, this is one of the proteins that binds to the 5S RNA in the ribosome where it forms part of the central protuberance. The protein is Large ribosomal subunit protein bL25 of Leifsonia xyli subsp. xyli (strain CTCB07).